A 611-amino-acid polypeptide reads, in one-letter code: Lanthanide-dependent methanol dehydrogenase (611 aa).

Positions 1–34 (MTVKLKKPKKYAVAKNATLLAAFGLIGSLSLAKA) are cleaved as a signal peptide. Cys138 and Cys139 are disulfide-bonded. Pyrroloquinoline quinone-binding residues include Arg144, Thr188, Ser203, Gly204, and Gly205. Glu206 serves as a coordination point for Ce(3+). Glu206 provides a ligand contact to Eu(3+). Pyrroloquinoline quinone-binding residues include Thr270 and Trp272. Residues Asn290, Asp333, and Asp335 each contribute to the Ce(3+) site. 3 residues coordinate Eu(3+): Asn290, Asp333, and Asp335. Arg360 is a binding site for pyrroloquinoline quinone. A disulfide bridge links Cys414 with Cys443. 2 residues coordinate pyrroloquinoline quinone: Trp501 and Trp566.

It belongs to the bacterial PQQ dehydrogenase family. Homodimer. Ce(3+) is required as a cofactor. Requires La(3+) as cofactor. The cofactor is Nd(3+). It depends on Pr(3+) as a cofactor. Eu(3+) serves as cofactor. Pyrroloquinoline quinone is required as a cofactor.

Its subcellular location is the periplasm. The catalysed reaction is 2 Fe(III)-[cytochrome cL] + methanol = 2 Fe(II)-[cytochrome cL] + formaldehyde + 2 H(+). It carries out the reaction 4 Fe(III)-[cytochrome cL] + methanol + H2O = 4 Fe(II)-[cytochrome cL] + formate + 5 H(+). The enzyme catalyses 2 Fe(III)-[cytochrome cL] + a primary alcohol = 2 Fe(II)-[cytochrome cL] + an aldehyde + 2 H(+). It functions in the pathway one-carbon metabolism; methanol degradation. In terms of biological role, catalyzes the oxidation of methanol to formaldehyde or formate in the presence of lanthanides (Ln). Is a key enzyme in methane/methanol metabolism, allowing M.fumariolicum to grow on methane as the sole carbon and energy source. Can also act on other primary alcohols in vitro, such as ethanol, 1-propanol, 1-butanol, and 1-hexanol, but is not able to oxidize secondary alcohols and acetaldehyde. Uses a specific cytochrome cL, encoded by the adjacent gene in the locus, as electron acceptor. The protein is Lanthanide-dependent methanol dehydrogenase of Methylacidiphilum fumariolicum (strain SolV).